Consider the following 722-residue polypeptide: Probable dipeptidyl-peptidase 5 (722 aa).

Positions 1–18 (MGALRWLSLAAAASSALA) are cleaved as a signal peptide. Residues Asn75, Asn78, Asn86, Asn94, Asn151, Asn253, and Asn448 are each glycosylated (N-linked (GlcNAc...) asparagine). Ser558 serves as the catalytic Charge relay system. Residue Asn605 is glycosylated (N-linked (GlcNAc...) asparagine). Catalysis depends on charge relay system residues Asp641 and His673.

It belongs to the peptidase S9C family.

It localises to the secreted. In terms of biological role, extracellular dipeptidyl-peptidase which removes N-terminal dipeptides sequentially from polypeptides having unsubstituted N-termini. The chain is Probable dipeptidyl-peptidase 5 (dpp5) from Emericella nidulans (strain FGSC A4 / ATCC 38163 / CBS 112.46 / NRRL 194 / M139) (Aspergillus nidulans).